Reading from the N-terminus, the 502-residue chain is Protein adenylyltransferase Fic (502 aa).

A disordered region spans residues 1–24 (MAMATGKATEEEQPEQGQQQQQLQ). Residues 15–24 (EQGQQQQQLQ) show a composition bias toward low complexity. A helical transmembrane segment spans residues 38-60 (FALFFIAGCLAAFGFHALTSSSG). TPR repeat units lie at residues 122–155 (AMGA…APKH) and 156–190 (PEVL…NPSN). Residues 247-252 (SVGIEG) carry the Inhibitory (S/T)XXXE(G/N) motif motif. ATP is bound by residues Glu251 and 332 to 335 (VGGH). The Fido domain occupies 301 to 436 (ITLKDILELH…IRPFVRFIAD (136 aa)). The active site involves His379. Residues 383–390 (DGNGRTSR), 415–416 (YY), and Asn423 each bind ATP. The tract at residues 478–502 (SPELYESGSGSGAGAGAGSGQKGMP) is disordered. Gly residues predominate over residues 486-502 (SGSGAGAGAGSGQKGMP).

This sequence belongs to the fic family. In terms of assembly, homodimer.

It is found in the membrane. It carries out the reaction L-tyrosyl-[protein] + ATP = O-(5'-adenylyl)-L-tyrosyl-[protein] + diphosphate. The enzyme catalyses L-threonyl-[protein] + ATP = 3-O-(5'-adenylyl)-L-threonyl-[protein] + diphosphate. The catalysed reaction is 3-O-(5'-adenylyl)-L-threonyl-[protein] + H2O = L-threonyl-[protein] + AMP + H(+). The side chain of Glu-251 determines which of the two opposing activities (AMPylase or de-AMPylase) will take place. In response to endoplasmic reticulum stress, mediates de-AMPylase activity. Adenylyltransferase activity is inhibited by the inhibitory helix present at the N-terminus: Glu-251 binds ATP and competes with ATP-binding at Arg-390, thereby preventing adenylyltransferase activity. In unstressed cells, disengagement of Glu-251 promotes adenylyltransferase activity. Activation dissociates ATP-binding from Glu-251, allowing ordered binding of the entire ATP moiety with the alpha-phosphate in an orientation that is productive for accepting an incoming target hydroxyl side chain. In terms of biological role, protein that can both mediate the addition of adenosine 5'-monophosphate (AMP) to specific residues of target proteins (AMPylation), and the removal of the same modification from target proteins (de-AMPylation), depending on the context. The side chain of Glu-251 determines which of the two opposing activities (AMPylase or de-AMPylase) will take place. Acts as a key regulator of the unfolded protein response (UPR) by mediating AMPylation or de-AMPylation of Hsc70-3/BiP. In unstressed cells, acts as an adenylyltransferase by mediating AMPylation of Hsc70-3/BiP at 'Thr-518', thereby inactivating it. In response to endoplasmic reticulum stress, acts as a phosphodiesterase by mediating removal of ATP (de-AMPylation) from Hsc70-3/BiP at 'Thr-518', leading to restore HSPA5/BiP activity. The polypeptide is Protein adenylyltransferase Fic (Drosophila mojavensis (Fruit fly)).